The chain runs to 357 residues: DnaJ homolog subfamily C member 25 (357 aa).

Residues 19–39 form a helical membrane-spanning segment; the sequence is WLLLAPLLLVPLLARPAEALV. Residues 48 to 121 form the J domain; the sequence is DCYEVLGVSR…ETRKDYDYML (74 aa). Transmembrane regions (helical) follow at residues 147–167 and 241–261; these read VVIL…WWNS and LLLF…AWYC.

This sequence belongs to the DNAJC25 family.

The protein resides in the membrane. This chain is DnaJ homolog subfamily C member 25 (Dnajc25), found in Mus musculus (Mouse).